We begin with the raw amino-acid sequence, 197 residues long: MRDKLNLLIFFIAALLIALGLRFTPTISFAGLILLLAVVPALMLRFRDFFSREAVIAGIFVLGLALNALIGVALAYTKSMEFGMSLLSLLPLTLVLTANVFATSLVIRIDASGKEVFAFYFWFLISVGLAFLFLLPTGGSAEISPRGAGWFRFVEFPILYSELALIPSAFCLVFQRVRTFLFFSPFPLFLDMSWSSL.

6 helical membrane-spanning segments follow: residues 5–23 (LNLL…GLRF), 27–46 (ISFA…MLRF), 55–77 (VIAG…LAYT), 87–109 (LSLL…VIRI), 116–138 (VFAF…LPTG), and 153–174 (FVEF…CLVF).

Its subcellular location is the cell membrane. This is an uncharacterized protein from Archaeoglobus fulgidus (strain ATCC 49558 / DSM 4304 / JCM 9628 / NBRC 100126 / VC-16).